A 381-amino-acid chain; its full sequence is Queuine tRNA-ribosyltransferase (381 aa).

The active-site Proton acceptor is the Asp-89. Residues 89-93 (DSGGF), Asp-143, Gln-187, and Gly-214 contribute to the substrate site. The tract at residues 245 to 251 (GVGKPED) is RNA binding. Catalysis depends on Asp-264, which acts as the Nucleophile. Residues 269-273 (TRNAR) form an RNA binding; important for wobble base 34 recognition region. Cys-302, Cys-304, Cys-307, and His-333 together coordinate Zn(2+).

This sequence belongs to the queuine tRNA-ribosyltransferase family. Homodimer. Within each dimer, one monomer is responsible for RNA recognition and catalysis, while the other monomer binds to the replacement base PreQ1. Zn(2+) is required as a cofactor.

The enzyme catalyses 7-aminomethyl-7-carbaguanine + guanosine(34) in tRNA = 7-aminomethyl-7-carbaguanosine(34) in tRNA + guanine. Its pathway is tRNA modification; tRNA-queuosine biosynthesis. Its function is as follows. Catalyzes the base-exchange of a guanine (G) residue with the queuine precursor 7-aminomethyl-7-deazaguanine (PreQ1) at position 34 (anticodon wobble position) in tRNAs with GU(N) anticodons (tRNA-Asp, -Asn, -His and -Tyr). Catalysis occurs through a double-displacement mechanism. The nucleophile active site attacks the C1' of nucleotide 34 to detach the guanine base from the RNA, forming a covalent enzyme-RNA intermediate. The proton acceptor active site deprotonates the incoming PreQ1, allowing a nucleophilic attack on the C1' of the ribose to form the product. After dissociation, two additional enzymatic reactions on the tRNA convert PreQ1 to queuine (Q), resulting in the hypermodified nucleoside queuosine (7-(((4,5-cis-dihydroxy-2-cyclopenten-1-yl)amino)methyl)-7-deazaguanosine). The chain is Queuine tRNA-ribosyltransferase from Pectobacterium atrosepticum (strain SCRI 1043 / ATCC BAA-672) (Erwinia carotovora subsp. atroseptica).